The primary structure comprises 762 residues: Protein PHTF1 (762 aa).

A PHTF domain is found at arginine 6–isoleucine 150. The next 3 helical transmembrane spans lie at glycine 77–leucine 97, isoleucine 99–methionine 119, and proline 121–valine 141. Residues arginine 152–lysine 184 are disordered. 2 N-linked (GlcNAc...) asparagine glycosylation sites follow: asparagine 179 and asparagine 224. 5 positions are modified to phosphoserine: serine 272, serine 276, serine 277, serine 334, and serine 336. Residues alanine 345–aspartate 415 form a disordered region. A compositionally biased stretch (low complexity) spans serine 348–leucine 364. Residue asparagine 363 is glycosylated (N-linked (GlcNAc...) asparagine). The span at serine 365–serine 376 shows a compositional bias: basic and acidic residues. An N-linked (GlcNAc...) asparagine glycan is attached at asparagine 431. Helical transmembrane passes span glycine 473–leucine 493, threonine 515–phenylalanine 535, valine 611–valine 631, and tryptophan 645–glycine 665. Residues asparagine 674 and asparagine 733 are each glycosylated (N-linked (GlcNAc...) asparagine). A helical membrane pass occupies residues valine 737–leucine 757.

Interacts with FEM1B. In terms of tissue distribution, highly expressed in testis.

The protein localises to the endoplasmic reticulum membrane. It localises to the golgi apparatus. Its subcellular location is the cis-Golgi network membrane. The polypeptide is Protein PHTF1 (Rattus norvegicus (Rat)).